The following is a 666-amino-acid chain: Chaperone protein dnaK1 (666 aa).

Thr-198 bears the Phosphothreonine; by autocatalysis mark.

The protein belongs to the heat shock protein 70 family.

Functionally, acts as a chaperone. This Prochlorococcus marinus (strain SARG / CCMP1375 / SS120) protein is Chaperone protein dnaK1 (dnaK1).